The primary structure comprises 312 residues: MKVAVLGAAGGIGQALALLLKTQLPSGSELSLYDIAPVTPGVAVDLSHIPTAVKIKGFSGEDATPALEGADVVLISAGVARKPGMDRSDLFNVNAGIVKNLVQQIATTCPKACVGIITNPVNTTVAIAAEVLKKAGVYDKNKLFGVTTLDIIRSNTFVAELKGKLPTDVEVPVIGGHSGVTILPLLSQIPGVSFTEQEVADLTKRIQNAGTEVVEAKAGGGSATLSMGQAAARFGLSLVRALQGEKDVVECAYVEGDGQYARFFSQPLLLGKNGVEERKSIGKLSAFEQNALEGMLDTLKKDIALGEEFVNK.

NAD(+) contacts are provided by residues 7–13 (GAAGGIG) and Asp-34. Substrate is bound by residues Arg-81 and Arg-87. NAD(+) is bound by residues Asn-94 and 117–119 (ITN). Substrate-binding residues include Asn-119 and Arg-153. His-177 serves as the catalytic Proton acceptor. An NAD(+)-binding site is contributed by Met-227.

This sequence belongs to the LDH/MDH superfamily. MDH type 1 family. Homodimer.

It catalyses the reaction (S)-malate + NAD(+) = oxaloacetate + NADH + H(+). Catalyzes the reversible oxidation of malate to oxaloacetate. The polypeptide is Malate dehydrogenase (Citrobacter koseri (strain ATCC BAA-895 / CDC 4225-83 / SGSC4696)).